A 399-amino-acid polypeptide reads, in one-letter code: CCA-adding enzyme (399 aa).

ATP is bound by residues G33 and R36. Positions 33 and 36 each coordinate CTP. Positions 46 and 48 each coordinate Mg(2+). Residues R117, D160, R163, R166, and R169 each coordinate ATP. Residues R117, D160, R163, R166, and R169 each contribute to the CTP site.

The protein belongs to the tRNA nucleotidyltransferase/poly(A) polymerase family. Bacterial CCA-adding enzyme type 3 subfamily. As to quaternary structure, homodimer. The cofactor is Mg(2+).

The enzyme catalyses a tRNA precursor + 2 CTP + ATP = a tRNA with a 3' CCA end + 3 diphosphate. It catalyses the reaction a tRNA with a 3' CCA end + 2 CTP + ATP = a tRNA with a 3' CCACCA end + 3 diphosphate. Catalyzes the addition and repair of the essential 3'-terminal CCA sequence in tRNAs without using a nucleic acid template. Adds these three nucleotides in the order of C, C, and A to the tRNA nucleotide-73, using CTP and ATP as substrates and producing inorganic pyrophosphate. tRNA 3'-terminal CCA addition is required both for tRNA processing and repair. Also involved in tRNA surveillance by mediating tandem CCA addition to generate a CCACCA at the 3' terminus of unstable tRNAs. While stable tRNAs receive only 3'-terminal CCA, unstable tRNAs are marked with CCACCA and rapidly degraded. The polypeptide is CCA-adding enzyme (Lactobacillus helveticus (strain DPC 4571)).